The following is a 398-amino-acid chain: 8-amino-7-oxononanoate synthase (398 aa).

Arginine 26 contributes to the substrate binding site. 113-114 lines the pyridoxal 5'-phosphate pocket; sequence GF. Position 138 (histidine 138) interacts with substrate. Positions 181, 209, and 238 each coordinate pyridoxal 5'-phosphate. An N6-(pyridoxal phosphate)lysine modification is found at lysine 241. Residue threonine 355 participates in substrate binding.

The protein belongs to the class-II pyridoxal-phosphate-dependent aminotransferase family. BioF subfamily. As to quaternary structure, homodimer. Pyridoxal 5'-phosphate is required as a cofactor.

It carries out the reaction 6-carboxyhexanoyl-[ACP] + L-alanine + H(+) = (8S)-8-amino-7-oxononanoate + holo-[ACP] + CO2. It functions in the pathway cofactor biosynthesis; biotin biosynthesis. Its function is as follows. Catalyzes the decarboxylative condensation of pimeloyl-[acyl-carrier protein] and L-alanine to produce 8-amino-7-oxononanoate (AON), [acyl-carrier protein], and carbon dioxide. The sequence is that of 8-amino-7-oxononanoate synthase from Aeromonas hydrophila subsp. hydrophila (strain ATCC 7966 / DSM 30187 / BCRC 13018 / CCUG 14551 / JCM 1027 / KCTC 2358 / NCIMB 9240 / NCTC 8049).